The primary structure comprises 248 residues: 3-deoxy-manno-octulosonate cytidylyltransferase (248 aa).

It belongs to the KdsB family.

Its subcellular location is the cytoplasm. The catalysed reaction is 3-deoxy-alpha-D-manno-oct-2-ulosonate + CTP = CMP-3-deoxy-beta-D-manno-octulosonate + diphosphate. Its pathway is nucleotide-sugar biosynthesis; CMP-3-deoxy-D-manno-octulosonate biosynthesis; CMP-3-deoxy-D-manno-octulosonate from 3-deoxy-D-manno-octulosonate and CTP: step 1/1. It functions in the pathway bacterial outer membrane biogenesis; lipopolysaccharide biosynthesis. In terms of biological role, activates KDO (a required 8-carbon sugar) for incorporation into bacterial lipopolysaccharide in Gram-negative bacteria. The polypeptide is 3-deoxy-manno-octulosonate cytidylyltransferase (Chlorobium phaeobacteroides (strain BS1)).